Reading from the N-terminus, the 341-residue chain is Phenylalanine--tRNA ligase alpha subunit (341 aa).

Position 256 (Glu-256) interacts with Mg(2+).

The protein belongs to the class-II aminoacyl-tRNA synthetase family. Phe-tRNA synthetase alpha subunit type 1 subfamily. As to quaternary structure, tetramer of two alpha and two beta subunits. Mg(2+) serves as cofactor.

It localises to the cytoplasm. The enzyme catalyses tRNA(Phe) + L-phenylalanine + ATP = L-phenylalanyl-tRNA(Phe) + AMP + diphosphate + H(+). In Chlamydia muridarum (strain MoPn / Nigg), this protein is Phenylalanine--tRNA ligase alpha subunit (pheS).